Reading from the N-terminus, the 191-residue chain is Syndecan-2-A (191 aa).

Positions 1-22 are cleaved as a signal peptide; it reads MRNVWLIVPFALLAALSGETWA. The Extracellular segment spans residues 23-137; the sequence is QADRDLYIDS…NLFHRTEVLA (115 aa). Residues 32–60 form a disordered region; sequence STESSGNYPVDDDDYSSGSGSGIPARGDD. Residues Ser36, Ser48, Ser50, and Ser52 are each glycosylated (O-linked (Xyl...) (glycosaminoglycan) serine). The helical transmembrane segment at 138 to 158 threads the bilayer; that stretch reads AVIAGGGIGFLFAVFLILLLV. Residues 159-191 are Cytoplasmic-facing; sequence YRMRKKDEGSYDLGERKPSSAVYQKAPTKEFYA. The interval 168 to 191 is disordered; that stretch reads SYDLGERKPSSAVYQKAPTKEFYA.

The protein belongs to the syndecan proteoglycan family. In terms of processing, O-glycosylated; contains both heparan sulfate and chondroitin sulfate.

Its subcellular location is the membrane. Cell surface proteoglycan. This chain is Syndecan-2-A (sdc2-a), found in Xenopus laevis (African clawed frog).